The sequence spans 771 residues: Polyribonucleotide nucleotidyltransferase (771 aa).

2 residues coordinate Mg(2+): Asp487 and Asp493. Residues Pro554 to Ile613 enclose the KH domain. The S1 motif domain occupies Gly623–Arg691. The interval Glu696–Asp771 is disordered. The segment covering Glu702–Asp771 has biased composition (basic and acidic residues).

Belongs to the polyribonucleotide nucleotidyltransferase family. It depends on Mg(2+) as a cofactor.

It is found in the cytoplasm. It carries out the reaction RNA(n+1) + phosphate = RNA(n) + a ribonucleoside 5'-diphosphate. Functionally, involved in mRNA degradation. Catalyzes the phosphorolysis of single-stranded polyribonucleotides processively in the 3'- to 5'-direction. The chain is Polyribonucleotide nucleotidyltransferase from Sphingopyxis alaskensis (strain DSM 13593 / LMG 18877 / RB2256) (Sphingomonas alaskensis).